The sequence spans 227 residues: GTP:AMP phosphotransferase AK3, mitochondrial (227 aa).

The GTP site is built by Gly-17, Gly-19, Lys-20, Gly-21, and Thr-22. Residue Lys-20 is modified to N6-succinyllysine. Residue Lys-34 is modified to N6-acetyllysine. Phosphoserine is present on Ser-37. The NMP stretch occupies residues 37–66 (SSGDLLRDNMLRGTEIGVLAKAFIDQGKLI). 2 residues coordinate AMP: Ser-38 and Arg-43. An N6-succinyllysine modification is found at Lys-57. AMP is bound at residue Lys-64. 2 positions are modified to N6-acetyllysine; alternate: Lys-64 and Lys-80. Residues Lys-64 and Lys-80 each carry the N6-succinyllysine; alternate modification. Residues Gly-91, Arg-94, and Gln-98 each contribute to the AMP site. The interval 127-164 (ARWIHPASGRVYNIEFNPPKTVGIDDLTGEPLIQREDD) is LID. 5 residues coordinate GTP: Arg-128, Tyr-138, Asn-139, Arg-161, and Arg-172. N6-acetyllysine; alternate is present on residues Lys-174 and Lys-189. Lys-174 and Lys-189 each carry N6-succinyllysine; alternate. Thr-201 provides a ligand contact to GTP. Lys-203 carries the post-translational modification N6-acetyllysine.

Belongs to the adenylate kinase family. AK3 subfamily. Monomer. Highly expressed in heart, skeletal muscle and liver, moderately expressed in pancreas and kidney, and weakly expressed in placenta, brain and lung.

Its subcellular location is the mitochondrion matrix. The catalysed reaction is a ribonucleoside 5'-triphosphate + AMP = a ribonucleoside 5'-diphosphate + ADP. It catalyses the reaction GTP + AMP = GDP + ADP. The enzyme catalyses ITP + AMP = IDP + ADP. Its activity is regulated as follows. Inhibited by ATP. Mitochondrial adenylate kinase with a specific GTP:AMP phosphotransferase activity. Could also use ITP as phosphate donor. Its physiological function is to recycle GTP into GDP which is necessary for the TCA cycle in the mitochondrial matrix. This chain is GTP:AMP phosphotransferase AK3, mitochondrial, found in Homo sapiens (Human).